A 364-amino-acid polypeptide reads, in one-letter code: ERCC4 domain-containing protein EP364R (364 aa).

The ERCC4 domain maps to 3–102 (FLVADHREHH…QLYFFVEGPA (100 aa)). A compositionally biased stretch (polar residues) spans 319-328 (ASRPATQPAA). Residues 319–352 (ASRPATQPAATQPLHEVSDDATSNASDTSSPIGH) are disordered. Residues 338–348 (DATSNASDTSS) show a composition bias toward low complexity.

Belongs to the asfivirus EP364R family.

Functionally, plays a role in the inhibition of type I interferon signaling pathway. Mechanistically, specifically interacts with 2',3'-cGAMP and cleaves it via its phosphodiesterase activity. In turn, prevents 2',3'-cGAMP interaction with host ER-resident STING1 leading to inhibition of downstream signaling pathway and type I interferon production. In African swine fever virus (strain Badajoz 1971 Vero-adapted) (Ba71V), this protein is ERCC4 domain-containing protein EP364R.